The primary structure comprises 344 residues: Phosphate acyltransferase (344 aa).

This sequence belongs to the PlsX family. As to quaternary structure, homodimer. Probably interacts with PlsY.

The protein resides in the cytoplasm. It catalyses the reaction a fatty acyl-[ACP] + phosphate = an acyl phosphate + holo-[ACP]. It participates in lipid metabolism; phospholipid metabolism. In terms of biological role, catalyzes the reversible formation of acyl-phosphate (acyl-PO(4)) from acyl-[acyl-carrier-protein] (acyl-ACP). This enzyme utilizes acyl-ACP as fatty acyl donor, but not acyl-CoA. The sequence is that of Phosphate acyltransferase from Blochmanniella floridana.